Consider the following 87-residue polypeptide: Small ribosomal subunit protein uS17 (87 aa).

It belongs to the universal ribosomal protein uS17 family. As to quaternary structure, part of the 30S ribosomal subunit.

In terms of biological role, one of the primary rRNA binding proteins, it binds specifically to the 5'-end of 16S ribosomal RNA. This is Small ribosomal subunit protein uS17 from Bacillus licheniformis (strain ATCC 14580 / DSM 13 / JCM 2505 / CCUG 7422 / NBRC 12200 / NCIMB 9375 / NCTC 10341 / NRRL NRS-1264 / Gibson 46).